The chain runs to 173 residues: Shikimate kinase 2 (173 aa).

Residue 12–17 coordinates ATP; it reads GCGKTT. Mg(2+) is bound by residues T16 and D32. Residues D34, R58, and G79 each coordinate substrate. Positions 112–126 are LID domain; it reads QASPQAHQRPTLTGR. Residue R120 coordinates ATP. R139 contacts substrate. Residue Q155 participates in ATP binding.

Monomer. Requires Mg(2+) as cofactor.

The protein resides in the cytoplasm. It catalyses the reaction shikimate + ATP = 3-phosphoshikimate + ADP + H(+). Its pathway is metabolic intermediate biosynthesis; chorismate biosynthesis; chorismate from D-erythrose 4-phosphate and phosphoenolpyruvate: step 5/7. Its activity is regulated as follows. Inhibited by chloride and sulfate ions. Its function is as follows. Catalyzes the specific phosphorylation of the 3-hydroxyl group of shikimic acid using ATP as a cosubstrate. In Dickeya chrysanthemi (Pectobacterium chrysanthemi), this protein is Shikimate kinase 2 (aroL).